A 306-amino-acid chain; its full sequence is Peroxisome biogenesis factor 10 (306 aa).

Residues 1 to 52 (MHLSAHIDPLQIILCTEIDEACIQFIKSQIEGIARACGPRMQANFEGVLIPY) are Peroxisomal matrix-facing. A helical transmembrane segment spans residues 53 to 84 (VDVLGKFLYRACCLRYATMGEEAARIVLAKQD). Residues 85–147 (RSKGLVLATT…PEAVISKEKH (63 aa)) are Cytoplasmic-facing. A helical transmembrane segment spans residues 148-174 (LVYILNSFKPILLKLVSIIRFLCLTMK). Over 175–202 (GHCATVSQLLLGLKYISLDEINPEEKKK) the chain is Peroxisomal matrix. Residues 203-219 (VLTLLLLLGSRLIASIL) form a helical membrane-spanning segment. At 220–306 (QHSNSYFDQH…SSPSKIILLR (87 aa)) the chain is on the cytoplasmic side. Residues cysteine 256, cysteine 259, cysteine 271, histidine 273, cysteine 276, cysteine 279, cysteine 290, and cysteine 293 each contribute to the Zn(2+) site. The RING-type zinc finger occupies 256–294 (CSLCMEFIHCPAATECGHIFCWSCINGWTSKKSECPLCR).

Belongs to the pex2/pex10/pex12 family. As to quaternary structure, component of the PEX2-PEX10-PEX12 retrotranslocation channel, composed of PEX2, PEX10 and PEX12.

The protein resides in the peroxisome membrane. It catalyses the reaction S-ubiquitinyl-[E2 ubiquitin-conjugating enzyme]-L-cysteine + [acceptor protein]-L-lysine = [E2 ubiquitin-conjugating enzyme]-L-cysteine + N(6)-ubiquitinyl-[acceptor protein]-L-lysine.. It functions in the pathway protein modification; protein ubiquitination. The E3 ubiquitin-protein ligase activity is stimulated by PEX12. E3 ubiquitin-protein ligase component of a retrotranslocation channel required for peroxisome organization by mediating export of the PEX5 receptor from peroxisomes to the cytosol, thereby promoting PEX5 recycling. The retrotranslocation channel is composed of PEX2, PEX10 and PEX12; each subunit contributing transmembrane segments that coassemble into an open channel that specifically allows the passage of PEX5 through the peroxisomal membrane. PEX10 also regulates PEX5 recycling by acting as a E3 ubiquitin-protein ligase. When PEX5 recycling is compromised, PEX10 catalyzes polyubiquitination of PEX5 during its passage through the retrotranslocation channel, leading to its degradation. In Schizosaccharomyces pombe (strain 972 / ATCC 24843) (Fission yeast), this protein is Peroxisome biogenesis factor 10 (pas4).